Consider the following 202-residue polypeptide: dTTP/UTP pyrophosphatase (202 aa).

Catalysis depends on Asp-80, which acts as the Proton acceptor.

Belongs to the Maf family. YhdE subfamily. It depends on a divalent metal cation as a cofactor.

The protein localises to the cytoplasm. The enzyme catalyses dTTP + H2O = dTMP + diphosphate + H(+). It carries out the reaction UTP + H2O = UMP + diphosphate + H(+). In terms of biological role, nucleoside triphosphate pyrophosphatase that hydrolyzes dTTP and UTP. May have a dual role in cell division arrest and in preventing the incorporation of modified nucleotides into cellular nucleic acids. This is dTTP/UTP pyrophosphatase from Alkalilimnicola ehrlichii (strain ATCC BAA-1101 / DSM 17681 / MLHE-1).